A 151-amino-acid chain; its full sequence is UPF0178 protein Pfl01_5469 (151 aa).

This sequence belongs to the UPF0178 family.

The polypeptide is UPF0178 protein Pfl01_5469 (Pseudomonas fluorescens (strain Pf0-1)).